The chain runs to 384 residues: S-adenosylmethionine synthase (384 aa).

Position 15 (His-15) interacts with ATP. Asp-17 is a Mg(2+) binding site. Residue Glu-43 coordinates K(+). Positions 56 and 99 each coordinate L-methionine. The flexible loop stretch occupies residues 99 to 109; that stretch reads QSPDINQGVDR. Residues 164 to 166, 231 to 232, Asp-240, 246 to 247, Ala-263, and Lys-267 contribute to the ATP site; these read DAK, RF, and RK. Asp-240 contributes to the L-methionine binding site. L-methionine is bound at residue Lys-271.

This sequence belongs to the AdoMet synthase family. In terms of assembly, homotetramer; dimer of dimers. Requires Mg(2+) as cofactor. It depends on K(+) as a cofactor.

The protein localises to the cytoplasm. It carries out the reaction L-methionine + ATP + H2O = S-adenosyl-L-methionine + phosphate + diphosphate. The protein operates within amino-acid biosynthesis; S-adenosyl-L-methionine biosynthesis; S-adenosyl-L-methionine from L-methionine: step 1/1. Catalyzes the formation of S-adenosylmethionine (AdoMet) from methionine and ATP. The overall synthetic reaction is composed of two sequential steps, AdoMet formation and the subsequent tripolyphosphate hydrolysis which occurs prior to release of AdoMet from the enzyme. This Shewanella halifaxensis (strain HAW-EB4) protein is S-adenosylmethionine synthase.